The primary structure comprises 125 residues: S-adenosylmethionine decarboxylase proenzyme (125 aa).

The active-site Schiff-base intermediate with substrate; via pyruvic acid is serine 71. Serine 71 carries the pyruvic acid (Ser); by autocatalysis modification. The active-site Proton acceptor; for processing activity is histidine 76. The Proton donor; for catalytic activity role is filled by cysteine 91.

Belongs to the prokaryotic AdoMetDC family. Type 1 subfamily. Heterotetramer of two alpha and two beta chains arranged as a dimer of alpha/beta heterodimers. Pyruvate is required as a cofactor. In terms of processing, is synthesized initially as an inactive proenzyme. Formation of the active enzyme involves a self-maturation process in which the active site pyruvoyl group is generated from an internal serine residue via an autocatalytic post-translational modification. Two non-identical subunits are generated from the proenzyme in this reaction, and the pyruvate is formed at the N-terminus of the alpha chain, which is derived from the carboxyl end of the proenzyme. The post-translation cleavage follows an unusual pathway, termed non-hydrolytic serinolysis, in which the side chain hydroxyl group of the serine supplies its oxygen atom to form the C-terminus of the beta chain, while the remainder of the serine residue undergoes an oxidative deamination to produce ammonia and the pyruvoyl group blocking the N-terminus of the alpha chain.

It carries out the reaction S-adenosyl-L-methionine + H(+) = S-adenosyl 3-(methylsulfanyl)propylamine + CO2. Its pathway is amine and polyamine biosynthesis; S-adenosylmethioninamine biosynthesis; S-adenosylmethioninamine from S-adenosyl-L-methionine: step 1/1. Catalyzes the decarboxylation of S-adenosylmethionine to S-adenosylmethioninamine (dcAdoMet), the propylamine donor required for the synthesis of the polyamines spermine and spermidine from the diamine putrescine. This is S-adenosylmethionine decarboxylase proenzyme from Pyrobaculum arsenaticum (strain DSM 13514 / JCM 11321 / PZ6).